The chain runs to 365 residues: 3-galactosyl-N-acetylglucosaminide 4-alpha-L-fucosyltransferase FUT3 (365 aa).

The Cytoplasmic portion of the chain corresponds to 1–15; that stretch reads MYPPGCAKVKCSWHH. A helical; Signal-anchor for type II membrane protein transmembrane segment spans residues 16-34; sequence CLPGLLLQLLLALCFFSYL. Residues 35–365 lie on the Lumenal side of the membrane; that stretch reads RMSQEKPKPK…TVPSIASWFQ (331 aa). N-linked (GlcNAc...) asparagine glycosylation is found at asparagine 100, asparagine 158, and asparagine 189.

The protein belongs to the glycosyltransferase 10 family. Post-translationally, glycosylated. In terms of tissue distribution, liver, kidney, lung and brain.

The protein resides in the golgi apparatus. It localises to the golgi stack membrane. It carries out the reaction a beta-D-galactosyl-(1-&gt;3)-N-acetyl-beta-D-glucosaminyl derivative + GDP-beta-L-fucose = a beta-D-galactosyl-(1-&gt;3)-[alpha-L-fucosyl-(1-&gt;4)]-N-acetyl-beta-D-glucosaminyl derivative + GDP + H(+). The catalysed reaction is an N-acetyl-alpha-neuraminyl-(2-&gt;3)-beta-D-galactosyl-(1-&gt;4)-N-acetyl-beta-D-glucosaminyl derivative + GDP-beta-L-fucose = an alpha-Neu5Ac-(2-&gt;3)-beta-D-Gal-(1-&gt;4)-[alpha-L-Fuc-(1-&gt;3)]-beta-D-GlcNAc derivative + GDP + H(+). It catalyses the reaction a beta-D-galactosyl-(1-&gt;4)-N-acetyl-beta-D-glucosaminyl derivative + GDP-beta-L-fucose = a beta-D-galactosyl-(1-&gt;4)-[alpha-L-fucosyl-(1-&gt;3)]-N-acetyl-beta-D-glucosaminyl derivative + GDP + H(+). The enzyme catalyses an alpha-Neu5Ac-(2-&gt;3)-beta-D-Gal-(1-&gt;4)-beta-D-GlcNAc-(1-&gt;3)-beta-D-Gal-(1-&gt;4)-[alpha-L-Fuc-(1-&gt;3)]-beta-D-GlcNAc derivative + GDP-beta-L-fucose = an alpha-Neu5Ac-(2-&gt;3)-beta-D-Gal-(1-&gt;4)-[alpha-L-Fuc-(1-&gt;3)]-beta-D-GlcNAc-(1-&gt;3)-beta-D-Gal-(1-&gt;4)-[alpha-L-Fuc-(1-&gt;3)]-beta-D-GlcNAc derivative + GDP + H(+). It carries out the reaction Lc4Cer + GDP-beta-L-fucose = a lactoside III(4)-a-Fuc-Lc4Cer + GDP + H(+). The catalysed reaction is a beta-D-Gal-(1-&gt;3)-beta-D-GlcNAc-(1-&gt;3)-beta-D-Gal-(1-&gt;4)-beta-D-Glc-(1&lt;-&gt;1')-Cer(d18:1(4E)) + GDP-beta-L-fucose = a III(4)-a-Fuc-Lc4Cer(d18:1(4E)) + GDP + H(+). It catalyses the reaction N-acetyl-alpha-neuraminosyl-(2-&gt;3)-beta-D-galactosyl-(1-&gt;3)-[N-acetyl-alpha-neuraminosyl-(2-&gt;6)]-N-acetyl-beta-D-glucosaminyl-(1-&gt;3)-beta-D-galactosyl-(1-&gt;4)-beta-D-glucosyl-(1&lt;-&gt;1')-N-acyl-sphing-4-enine + GDP-beta-L-fucose = N-acetyl-alpha-neuraminosyl-(2-&gt;3)-beta-D-galactosyl-(1-&gt;3)-alpha-L-fucosyl-(1-&gt;4)-[N-acetyl-alpha-neuraminosyl-(2-&gt;6)-N-acetyl-beta-D-glucosaminyl-(1-&gt;3)]-beta-D-galactosyl-(1-&gt;4)-beta-D-glucosyl-(1&lt;-&gt;1')-N-acyl-sphing-4-enine + GDP + H(+). The enzyme catalyses N-acetyl-alpha-neuraminosyl-(2-&gt;3)-beta-D-galactosyl-(1-&gt;3)-N-acetyl-beta-D-glucosaminyl-(1-&gt;3)-beta-D-galactosyl-(1-&gt;4)-beta-D-glucosyl-(1&lt;-&gt;1')-N-acyl-sphing-4-enine + GDP-beta-L-fucose = N-acetyl-alpha-neuraminosyl-(2-&gt;3)-beta-D-galactosyl-(1-&gt;3)-alpha-L-fucosyl-(1-&gt;4)-[N-acetyl-beta-D-glucosaminyl-(1-&gt;3)]-beta-D-galactosyl-(1-&gt;4)-beta-D-glucosyl-(1&lt;-&gt;1')-N-acyl-sphing-4-enine + GDP + H(+). It carries out the reaction beta-D-galactosyl-(1-&gt;3)-N-acetyl-D-glucosamine + GDP-beta-L-fucose = beta-D-galactosyl-(1-&gt;3)-[alpha-L-fucosyl-(1-&gt;4)]-N-acetyl-D-glucosamine + GDP + H(+). The catalysed reaction is alpha-L-Fuc-(1-&gt;2)-beta-D-Gal-(1-&gt;3)-D-GlcNAc + GDP-beta-L-fucose = alpha-L-Fuc-(1-&gt;2)-beta-D-Gal-(1-&gt;3)-[alpha-L-Fuc-(1-&gt;4)]-D-GlcNAc + GDP + H(+). It catalyses the reaction alpha-L-Fuc-(1-&gt;2)-beta-D-Gal-(1-&gt;4)-D-GlcNAc + GDP-beta-L-fucose = alpha-L-Fuc-(1-&gt;2)-beta-D-Gal-(1-&gt;4)-[alpha-L-Fuc-(1-&gt;3)]-D-GlcNAc + GDP + H(+). The enzyme catalyses beta-D-galactosyl-(1-&gt;4)-N-acetyl-D-glucosamine + GDP-beta-L-fucose = beta-D-galactosyl-(1-&gt;4)-[alpha-L-fucosyl-(1-&gt;3)]-N-acetyl-D-glucosamine + GDP + H(+). It carries out the reaction lactose + GDP-beta-L-fucose = beta-D-galactosyl-(1-&gt;4)-[alpha-L-fucosyl-(1-&gt;3)]-D-glucose + GDP + H(+). The catalysed reaction is an alpha-Neu5Ac-(2-&gt;3)-beta-D-Gal-(1-&gt;3)-D-GlcNAc derivative + GDP-beta-L-fucose = an alpha-Neu5Ac-(2-&gt;3)-beta-D-Gal-(1-&gt;3)-[alpha-L-Fuc-(1-&gt;4)]-beta-D-GlcNAc derivative + GDP + H(+). It functions in the pathway protein modification; protein glycosylation. Functionally, catalyzes the transfer of L-fucose, from a guanosine diphosphate-beta-L-fucose, to both the subterminal N-acetyl glucosamine (GlcNAc) of type 1 chain (beta-D-Gal-(1-&gt;3)-beta-D-GlcNAc) glycolipids and oligosaccharides via an alpha(1,4) linkage, and the subterminal glucose (Glc) or GlcNAc of type 2 chain (beta-D-Gal-(1-&gt;4)-beta-D-GlcNAc) oligosaccharides via an alpha(1,3) linkage, independently of the presence of terminal alpha-L-fucosyl-(1,2) moieties on the terminal galactose of these acceptors and participates in the blood groups Lewis determination and expression of Lewis a (Le(a)), lewis b (Le(b)), Lewis x/SSEA-1 (Le(x)) and lewis y (Le(y)) antigens. Also catalyzes the transfer of L-fucose to subterminal GlcNAc of sialyl- and disialyl-lactotetraosylceramide to produce sialyl Lewis a (sLe(a)) and disialyl Lewis a via an alpha(1,4) linkage and therefore may regulate cell surface sialyl Lewis a expression and consequently regulates adhesive properties to E-selectin, cell proliferation and migration. Catalyzes the transfer of an L-fucose to 3'-sialyl-N-acetyllactosamine by an alpha(1,3) linkage, which allows the formation of sialyl-Lewis x structure and therefore may regulate the sialyl-Lewis x surface antigen expression and consequently adhesive properties to E-selectin. Prefers type 1 chain over type 2 acceptors. Type 1 tetrasaccharide is a better acceptor than type 1 disaccharide suggesting that a beta anomeric configuration of GlcNAc in the substrate is preferred. Lewis-positive (Le(+)) individuals have an active enzyme while Lewis-negative (Le(-)) individuals have an inactive enzyme. This chain is 3-galactosyl-N-acetylglucosaminide 4-alpha-L-fucosyltransferase FUT3, found in Bos taurus (Bovine).